Reading from the N-terminus, the 257-residue chain is 1-(5-phosphoribosyl)-5-[(5-phosphoribosylamino)methylideneamino] imidazole-4-carboxamide isomerase (257 aa).

The active-site Proton acceptor is the D8. D129 serves as the catalytic Proton donor.

This sequence belongs to the HisA/HisF family.

It is found in the cytoplasm. The catalysed reaction is 1-(5-phospho-beta-D-ribosyl)-5-[(5-phospho-beta-D-ribosylamino)methylideneamino]imidazole-4-carboxamide = 5-[(5-phospho-1-deoxy-D-ribulos-1-ylimino)methylamino]-1-(5-phospho-beta-D-ribosyl)imidazole-4-carboxamide. Its pathway is amino-acid biosynthesis; L-histidine biosynthesis; L-histidine from 5-phospho-alpha-D-ribose 1-diphosphate: step 4/9. In Rippkaea orientalis (strain PCC 8801 / RF-1) (Cyanothece sp. (strain PCC 8801)), this protein is 1-(5-phosphoribosyl)-5-[(5-phosphoribosylamino)methylideneamino] imidazole-4-carboxamide isomerase.